Here is a 359-residue protein sequence, read N- to C-terminus: Ribosomal RNA small subunit methyltransferase H (359 aa).

S-adenosyl-L-methionine contacts are provided by residues 39 to 41 (AGH), Asp-58, Phe-87, Asp-108, and Gln-115. Positions 339-359 (IQGSASPGRAKNTARIRTRRG) are disordered. Residues 350–359 (NTARIRTRRG) are compositionally biased toward basic residues.

This sequence belongs to the methyltransferase superfamily. RsmH family.

It localises to the cytoplasm. It catalyses the reaction cytidine(1402) in 16S rRNA + S-adenosyl-L-methionine = N(4)-methylcytidine(1402) in 16S rRNA + S-adenosyl-L-homocysteine + H(+). Its function is as follows. Specifically methylates the N4 position of cytidine in position 1402 (C1402) of 16S rRNA. The sequence is that of Ribosomal RNA small subunit methyltransferase H from Bifidobacterium longum subsp. infantis (strain ATCC 15697 / DSM 20088 / JCM 1222 / NCTC 11817 / S12).